The primary structure comprises 140 residues: Nucleoside diphosphate kinase (140 aa).

ATP contacts are provided by K11, F59, R87, T93, R104, and N114. H117 acts as the Pros-phosphohistidine intermediate in catalysis.

This sequence belongs to the NDK family. In terms of assembly, homotetramer. Mg(2+) is required as a cofactor.

Its subcellular location is the cytoplasm. The enzyme catalyses a 2'-deoxyribonucleoside 5'-diphosphate + ATP = a 2'-deoxyribonucleoside 5'-triphosphate + ADP. It carries out the reaction a ribonucleoside 5'-diphosphate + ATP = a ribonucleoside 5'-triphosphate + ADP. Major role in the synthesis of nucleoside triphosphates other than ATP. The ATP gamma phosphate is transferred to the NDP beta phosphate via a ping-pong mechanism, using a phosphorylated active-site intermediate. This chain is Nucleoside diphosphate kinase, found in Jannaschia sp. (strain CCS1).